A 119-amino-acid chain; its full sequence is MIIGIGIDIIELNRIEKMLDGKLKFMERILTENERNVAMELKGSRLTEFVAGRFAAKEAYSKAVGTGIGKEVSFLDIEVKNDERGKPILITSTEHIVHLSISHSKEFAVAQVVLESSSR.

Residues Asp-8 and Glu-58 each contribute to the Mg(2+) site.

Belongs to the P-Pant transferase superfamily. AcpS family. Requires Mg(2+) as cofactor.

The protein resides in the cytoplasm. It carries out the reaction apo-[ACP] + CoA = holo-[ACP] + adenosine 3',5'-bisphosphate + H(+). Transfers the 4'-phosphopantetheine moiety from coenzyme A to a Ser of acyl-carrier-protein. This is Holo-[acyl-carrier-protein] synthase from Bacillus cereus (strain B4264).